Reading from the N-terminus, the 73-residue chain is Omega-conotoxin GVIA (73 aa).

Positions 1 to 22 (MKLTCVVIVAVLLLTACQLITA) are cleaved as a signal peptide. A propeptide spanning residues 23–45 (DDSRGTQKHRALGSTTELSLSTR) is cleaved from the precursor. Disulfide bonds link C46–C61, C53–C64, and C60–C71. Residues P49, P55, and P66 each carry the 4-hydroxyproline modification. Y72 is modified (tyrosine amide; in form omega-conotoxin GVIA).

The protein belongs to the conotoxin O1 superfamily. Expressed by the venom duct.

The protein localises to the secreted. In terms of biological role, omega-conotoxins act at presynaptic membranes, they bind and block voltage-gated calcium channels (Cav). This toxin blocks N-type calcium channels (Cav2.2/CACNA1B) with a high potency (it displaces [125I]GVIA with an IC(50)=3.7-38 pM). This Conus geographus (Geography cone) protein is Omega-conotoxin GVIA.